The primary structure comprises 43 residues: Holotricin-1 (43 aa).

Disulfide bonds link Cys-3–Cys-34, Cys-20–Cys-39, and Cys-24–Cys-41.

This sequence belongs to the invertebrate defensin family. Type 1 subfamily. In terms of tissue distribution, hemolymph.

It localises to the secreted. Its function is as follows. Shows potent antibacterial activity against Gram-positive bacteria. This chain is Holotricin-1, found in Holotrichia diomphalia (Korean black chafer).